Reading from the N-terminus, the 144-residue chain is MLIPKRVKYRKQHRGRMTGKAKRGNRITFGEYGLQALEPAWITNRQIEAARVAITRSLKRGGKVWIKIFPDKPVTAKPAETRMGGGKGAPEKWVAVVKPGRIMFEVAGVSEELAREAIRLASHKLPIKTRFVKREEMDGEANES.

Belongs to the universal ribosomal protein uL16 family. Part of the 50S ribosomal subunit.

Its function is as follows. Binds 23S rRNA and is also seen to make contacts with the A and possibly P site tRNAs. The protein is Large ribosomal subunit protein uL16 of Halothermothrix orenii (strain H 168 / OCM 544 / DSM 9562).